The following is a 356-amino-acid chain: DNA polymerase IV (356 aa).

Residues 7 to 187 (IIHVDMDAFY…LPVNRVPGVG (181 aa)) enclose the UmuC domain. Mg(2+) contacts are provided by aspartate 11 and aspartate 105. Residue glutamate 106 is part of the active site.

Belongs to the DNA polymerase type-Y family. Monomer. Mg(2+) serves as cofactor.

The protein localises to the cytoplasm. The enzyme catalyses DNA(n) + a 2'-deoxyribonucleoside 5'-triphosphate = DNA(n+1) + diphosphate. Functionally, poorly processive, error-prone DNA polymerase involved in untargeted mutagenesis. Copies undamaged DNA at stalled replication forks, which arise in vivo from mismatched or misaligned primer ends. These misaligned primers can be extended by PolIV. Exhibits no 3'-5' exonuclease (proofreading) activity. May be involved in translesional synthesis, in conjunction with the beta clamp from PolIII. The polypeptide is DNA polymerase IV (Stenotrophomonas maltophilia (strain R551-3)).